The sequence spans 172 residues: Adenine phosphoribosyltransferase (172 aa).

This sequence belongs to the purine/pyrimidine phosphoribosyltransferase family. As to quaternary structure, homodimer.

Its subcellular location is the cytoplasm. It catalyses the reaction AMP + diphosphate = 5-phospho-alpha-D-ribose 1-diphosphate + adenine. The protein operates within purine metabolism; AMP biosynthesis via salvage pathway; AMP from adenine: step 1/1. In terms of biological role, catalyzes a salvage reaction resulting in the formation of AMP, that is energically less costly than de novo synthesis. This chain is Adenine phosphoribosyltransferase, found in Desulforamulus reducens (strain ATCC BAA-1160 / DSM 100696 / MI-1) (Desulfotomaculum reducens).